We begin with the raw amino-acid sequence, 493 residues long: Cytoplasmic tRNA 2-thiolation protein 2 (493 aa).

Ser489 is modified (phosphoserine).

It belongs to the CTU2/NCS2 family. Interacts with NCS6 and URM1. May act by forming a heterodimer with NCS6.

The protein localises to the cytoplasm. The protein operates within tRNA modification; 5-methoxycarbonylmethyl-2-thiouridine-tRNA biosynthesis. Functionally, plays a central role in 2-thiolation of mcm(5)S(2)U at tRNA wobble positions of tRNA(Lys), tRNA(Glu) and tRNA(Gln). May act by forming a heterodimer with NCS6 that ligates sulfur from thiocarboxylated URM1 onto the uridine of tRNAs at wobble position. Prior mcm(5) tRNA modification by the elongator complex is required for 2-thiolation. May also be involved in protein urmylation. This chain is Cytoplasmic tRNA 2-thiolation protein 2, found in Saccharomyces cerevisiae (strain AWRI1631) (Baker's yeast).